The chain runs to 100 residues: Large ribosomal subunit protein uL23 (100 aa).

The protein belongs to the universal ribosomal protein uL23 family. In terms of assembly, part of the 50S ribosomal subunit. Contacts protein L29, and trigger factor when it is bound to the ribosome.

One of the early assembly proteins it binds 23S rRNA. One of the proteins that surrounds the polypeptide exit tunnel on the outside of the ribosome. Forms the main docking site for trigger factor binding to the ribosome. This Bradyrhizobium diazoefficiens (strain JCM 10833 / BCRC 13528 / IAM 13628 / NBRC 14792 / USDA 110) protein is Large ribosomal subunit protein uL23.